We begin with the raw amino-acid sequence, 381 residues long: Chaperone protein DnaJ (381 aa).

In terms of domain architecture, J spans 5–69 (DYYEVLGVSK…EKRARYDRFG (65 aa)). A CR-type zinc finger spans residues 136–218 (GKETEIEVPH…CGGTGHVKKR (83 aa)). Positions 149, 152, 166, 169, 192, 195, 206, and 209 each coordinate Zn(2+). CXXCXGXG motif repeat units follow at residues 149–156 (CDTCHGSG), 166–173 (CPHCHGSG), 192–199 (CPVCGGTG), and 206–213 (CPTCGGTG). Positions 154–174 (GSGAKPGTSPQSCPHCHGSGQ) are disordered.

The protein belongs to the DnaJ family. In terms of assembly, homodimer. Zn(2+) serves as cofactor.

The protein localises to the cytoplasm. Functionally, participates actively in the response to hyperosmotic and heat shock by preventing the aggregation of stress-denatured proteins and by disaggregating proteins, also in an autonomous, DnaK-independent fashion. Unfolded proteins bind initially to DnaJ; upon interaction with the DnaJ-bound protein, DnaK hydrolyzes its bound ATP, resulting in the formation of a stable complex. GrpE releases ADP from DnaK; ATP binding to DnaK triggers the release of the substrate protein, thus completing the reaction cycle. Several rounds of ATP-dependent interactions between DnaJ, DnaK and GrpE are required for fully efficient folding. Also involved, together with DnaK and GrpE, in the DNA replication of plasmids through activation of initiation proteins. This Geobacillus thermodenitrificans (strain NG80-2) protein is Chaperone protein DnaJ.